A 204-amino-acid chain; its full sequence is 34 kDa membrane antigen (204 aa).

Residues 1 to 19 (MKRVSLLGSAAIFALVFSA) form the signal peptide. A lipid anchor (N-palmitoyl cysteine) is attached at cysteine 20. Residue cysteine 20 is the site of S-diacylglycerol cysteine attachment.

This sequence belongs to the UPF0423 family.

Its subcellular location is the cell membrane. This antigen is a pathogen-specific membrane immunogen. This is 34 kDa membrane antigen (tpd) from Treponema pallidum (strain Nichols).